The primary structure comprises 112 residues: Integration host factor subunit alpha (112 aa).

The protein belongs to the bacterial histone-like protein family. In terms of assembly, heterodimer of an alpha and a beta chain.

This protein is one of the two subunits of integration host factor, a specific DNA-binding protein that functions in genetic recombination as well as in transcriptional and translational control. The sequence is that of Integration host factor subunit alpha from Agrobacterium fabrum (strain C58 / ATCC 33970) (Agrobacterium tumefaciens (strain C58)).